A 219-amino-acid polypeptide reads, in one-letter code: Cytidylate kinase (219 aa).

15 to 23 (GPAASGKGT) serves as a coordination point for ATP.

Belongs to the cytidylate kinase family. Type 1 subfamily.

It localises to the cytoplasm. It carries out the reaction CMP + ATP = CDP + ADP. It catalyses the reaction dCMP + ATP = dCDP + ADP. The polypeptide is Cytidylate kinase (Brucella abortus (strain S19)).